A 94-amino-acid polypeptide reads, in one-letter code: Integration host factor subunit beta (94 aa).

Belongs to the bacterial histone-like protein family. As to quaternary structure, heterodimer of an alpha and a beta chain.

In terms of biological role, this protein is one of the two subunits of integration host factor, a specific DNA-binding protein that functions in genetic recombination as well as in transcriptional and translational control. The sequence is that of Integration host factor subunit beta from Chelativorans sp. (strain BNC1).